Consider the following 512-residue polypeptide: N-acetyltryptophan 6-hydroxylase ivoC (512 aa).

Residues 6–26 (LVFSFPAWALLLVLTLLYTLY) form a helical membrane-spanning segment. A glycan (N-linked (GlcNAc...) asparagine) is linked at asparagine 118. Cysteine 453 contacts heme.

This sequence belongs to the cytochrome P450 family. Requires heme as cofactor.

It is found in the membrane. It functions in the pathway pigment biosynthesis. In terms of biological role, N-acetyltryptophan 6-hydroxylase; part of the pathway that mediates the biosynthesis of the gray-brown conidiophore pigment. The first step of the pathway is performed by the nonribosomal peptide synthetase ivoA that catalyzes ATP-dependent unidirectional stereoinversion of L-tryptophan to D-tryptophan with complete conversion. While the stereoinversion is catalyzed by the epimerization (E) domain of ivoA, the terminal condensation (C) domain stereoselectively hydrolyzes D-tryptophanyl-S-phosphopantetheine thioester and thus represents a non-canonical C domain function. D-tryptophan is acetylated, probably by an endogenous acetyltransferase. N-acetyltryptophan is further 6-hydroxylated into N-acetyl-6-hydroxytryptophan (AHT) by the cytochrome P450 monooxygenase ivoC. N-acetyl-6-hydroxytryptophan is substrate of the N-acetyl-6-hydroxytryptophan oxidase ivoB to produce the gray-brown conidiophore pigment. The chain is N-acetyltryptophan 6-hydroxylase ivoC from Emericella nidulans (strain FGSC A4 / ATCC 38163 / CBS 112.46 / NRRL 194 / M139) (Aspergillus nidulans).